The chain runs to 622 residues: Kinesin light chain 2 (622 aa).

Residues 78–143 (ILALSSHLGA…KQHLLFMSQI (66 aa)) adopt a coiled-coil conformation. Over residues 145 to 164 (KLDEDASPNEEKGDVPKDTL) the composition is skewed to basic and acidic residues. Residues 145–191 (KLDEDASPNEEKGDVPKDTLDDLFPNEDEQSPAPSPGGGDVSGQHGG) form a disordered region. Phosphoserine occurs at positions 151, 175, and 179. Residues 180-190 (PGGGDVSGQHG) are compositionally biased toward gly residues. TPR repeat units lie at residues 198–231 (LRTL…LEKT), 240–273 (ATML…REKT), 282–315 (AATL…REKV), 324–357 (AKQL…YATR), and 366–399 (AKTK…AHEK). The residue at position 445 (Ser-445) is a Phosphoserine. Residues 449 to 482 (NTTLRSLGALYRRQGKLEAAHTLEDCASRNRKQG) form a TPR 6 repeat. Disordered regions lie at residues 476-548 (SRNR…SFGK) and 563-622 (KLQG…SLVG). Positions 493-509 (ELLKDGSGRRGDRRSSR) are enriched in basic and acidic residues. Ser-508 and Ser-521 each carry phosphoserine. Residues 538-547 (GSLRRSGSFG) show a composition bias toward low complexity. Phosphoserine is present on residues Ser-581, Ser-582, Ser-589, Ser-608, Ser-610, and Ser-615. The span at 601–622 (LSDSRTLSSSSMDLSRRSSLVG) shows a compositional bias: low complexity.

The protein belongs to the kinesin light chain family. In terms of assembly, oligomeric complex composed of two heavy chains and two light chains. Interacts (via TPR repeats) with PLEKHM2.

Its subcellular location is the cytoplasm. It is found in the cytoskeleton. It localises to the lysosome membrane. Kinesin is a microtubule-associated force-producing protein that plays a role in organelle transport. The light chain functions in coupling of cargo to the heavy chain or in the modulation of its ATPase activity. Through binding with PLEKHM2 and ARL8B, recruits kinesin-1 to lysosomes and hence direct lysosomes movement toward microtubule plus ends. The chain is Kinesin light chain 2 from Homo sapiens (Human).